We begin with the raw amino-acid sequence, 701 residues long: Polyribonucleotide nucleotidyltransferase (701 aa).

Positions 490 and 496 each coordinate Mg(2+). Residues 557-616 enclose the KH domain; the sequence is PKVETMTIKPEKIRDVIGPGGKKINEIIDETGVKLDIEQDGTIFIGAVDQDMINRAREII. The 69-residue stretch at 626 to 694 folds into the S1 motif domain; sequence GQVYNAKVRR…DKGRVNASHR (69 aa).

This sequence belongs to the polyribonucleotide nucleotidyltransferase family. The cofactor is Mg(2+).

Its subcellular location is the cytoplasm. The enzyme catalyses RNA(n+1) + phosphate = RNA(n) + a ribonucleoside 5'-diphosphate. Involved in mRNA degradation. Catalyzes the phosphorolysis of single-stranded polyribonucleotides processively in the 3'- to 5'-direction. The polypeptide is Polyribonucleotide nucleotidyltransferase (Staphylococcus carnosus (strain TM300)).